A 205-amino-acid chain; its full sequence is Thymidylate kinase (205 aa).

Residue 11 to 18 participates in ATP binding; it reads GVEGAGKS.

The protein belongs to the thymidylate kinase family.

It carries out the reaction dTMP + ATP = dTDP + ADP. Its function is as follows. Phosphorylation of dTMP to form dTDP in both de novo and salvage pathways of dTTP synthesis. This chain is Thymidylate kinase, found in Vesicomyosocius okutanii subsp. Calyptogena okutanii (strain HA).